Consider the following 659-residue polypeptide: UvrABC system protein B (659 aa).

The Helicase ATP-binding domain occupies 25–182 (QSIENGNRGQ…KKLIEIQYER (158 aa)). 38–45 (GVTGSGKT) is an ATP binding site. The Beta-hairpin motif lies at 91-114 (YYDYYQPEAYVPQTDTFIEKDASI). Positions 429–582 (QIDDLYGEIQ…QMEYNEEHNI (154 aa)) constitute a Helicase C-terminal domain. The UVR domain maps to 622–657 (EKLIEQYEEEMKEAAKNLQFERAAELRDIIKDLKEN).

This sequence belongs to the UvrB family. As to quaternary structure, forms a heterotetramer with UvrA during the search for lesions. Interacts with UvrC in an incision complex.

Its subcellular location is the cytoplasm. Its function is as follows. The UvrABC repair system catalyzes the recognition and processing of DNA lesions. A damage recognition complex composed of 2 UvrA and 2 UvrB subunits scans DNA for abnormalities. Upon binding of the UvrA(2)B(2) complex to a putative damaged site, the DNA wraps around one UvrB monomer. DNA wrap is dependent on ATP binding by UvrB and probably causes local melting of the DNA helix, facilitating insertion of UvrB beta-hairpin between the DNA strands. Then UvrB probes one DNA strand for the presence of a lesion. If a lesion is found the UvrA subunits dissociate and the UvrB-DNA preincision complex is formed. This complex is subsequently bound by UvrC and the second UvrB is released. If no lesion is found, the DNA wraps around the other UvrB subunit that will check the other stand for damage. The polypeptide is UvrABC system protein B (Clostridium perfringens (strain ATCC 13124 / DSM 756 / JCM 1290 / NCIMB 6125 / NCTC 8237 / Type A)).